The primary structure comprises 360 residues: Peptide chain release factor 1 (360 aa).

Position 235 is an N5-methylglutamine (Gln235).

Belongs to the prokaryotic/mitochondrial release factor family. In terms of processing, methylated by PrmC. Methylation increases the termination efficiency of RF1.

The protein localises to the cytoplasm. Its function is as follows. Peptide chain release factor 1 directs the termination of translation in response to the peptide chain termination codons UAG and UAA. In Burkholderia vietnamiensis (strain G4 / LMG 22486) (Burkholderia cepacia (strain R1808)), this protein is Peptide chain release factor 1.